Here is a 316-residue protein sequence, read N- to C-terminus: Pantothenate kinase (316 aa).

95-102 (GSVAVGKS) is a binding site for ATP.

Belongs to the prokaryotic pantothenate kinase family.

Its subcellular location is the cytoplasm. The catalysed reaction is (R)-pantothenate + ATP = (R)-4'-phosphopantothenate + ADP + H(+). Its pathway is cofactor biosynthesis; coenzyme A biosynthesis; CoA from (R)-pantothenate: step 1/5. The protein is Pantothenate kinase of Salmonella gallinarum (strain 287/91 / NCTC 13346).